The sequence spans 161 residues: Cyclic pyranopterin monophosphate synthase (161 aa).

Substrate contacts are provided by residues Leu75–His77 and Met113–Glu114. Asp128 is an active-site residue.

It belongs to the MoaC family. In terms of assembly, homohexamer; trimer of dimers.

It carries out the reaction (8S)-3',8-cyclo-7,8-dihydroguanosine 5'-triphosphate = cyclic pyranopterin phosphate + diphosphate. It functions in the pathway cofactor biosynthesis; molybdopterin biosynthesis. In terms of biological role, catalyzes the conversion of (8S)-3',8-cyclo-7,8-dihydroguanosine 5'-triphosphate to cyclic pyranopterin monophosphate (cPMP). The protein is Cyclic pyranopterin monophosphate synthase of Salmonella typhi.